The primary structure comprises 123 residues: Fluoride-specific ion channel FluC (123 aa).

Transmembrane regions (helical) follow at residues 5-25 (LIIG…SGII), 29-49 (FGIP…VGFV), 65-85 (LIIT…YETF), and 94-114 (IKFL…IYVG). Na(+) contacts are provided by glycine 72 and threonine 75.

The protein belongs to the fluoride channel Fluc/FEX (TC 1.A.43) family.

Its subcellular location is the cell membrane. The enzyme catalyses fluoride(in) = fluoride(out). Na(+) is not transported, but it plays an essential structural role and its presence is essential for fluoride channel function. Fluoride-specific ion channel. Important for reducing fluoride concentration in the cell, thus reducing its toxicity. This chain is Fluoride-specific ion channel FluC, found in Methanococcus aeolicus (strain ATCC BAA-1280 / DSM 17508 / OCM 812 / Nankai-3).